The following is a 250-amino-acid chain: MAKLEICCFGAECALIAERSGADRIELCTSPSEGGVTPSYGILKQVIDLVRIPVHPIIRPRGGDFCYSQADFAAMKNDISMIRDMGFSGAVVGILNEEGHIDLPKMAILMELAGPLAITFHRAFDMCINPLLALDQLTQLGVARILTSGQQANAELGLPLLRTLNEKTQGPIIMAGAGVRLSNIQKFLDSGLQEIHSSAGKQAPSTMNYRKAGVTMSSDSEVDEFTHYCVDEDVVGAMKDIMSIYTTSVN.

The protein belongs to the CutC family.

Its subcellular location is the cytoplasm. This Proteus mirabilis (strain HI4320) protein is PF03932 family protein CutC.